A 366-amino-acid chain; its full sequence is Chorismate synthase (366 aa).

Residues Arg48 and Arg54 each contribute to the NADP(+) site. Residues 125 to 127, 241 to 242, Gly285, 300 to 304, and Arg326 contribute to the FMN site; these read RSS, NA, and KPTSS.

Belongs to the chorismate synthase family. Homotetramer. The cofactor is FMNH2.

It catalyses the reaction 5-O-(1-carboxyvinyl)-3-phosphoshikimate = chorismate + phosphate. Its pathway is metabolic intermediate biosynthesis; chorismate biosynthesis; chorismate from D-erythrose 4-phosphate and phosphoenolpyruvate: step 7/7. Catalyzes the anti-1,4-elimination of the C-3 phosphate and the C-6 proR hydrogen from 5-enolpyruvylshikimate-3-phosphate (EPSP) to yield chorismate, which is the branch point compound that serves as the starting substrate for the three terminal pathways of aromatic amino acid biosynthesis. This reaction introduces a second double bond into the aromatic ring system. This chain is Chorismate synthase, found in Cereibacter sphaeroides (strain ATCC 17023 / DSM 158 / JCM 6121 / CCUG 31486 / LMG 2827 / NBRC 12203 / NCIMB 8253 / ATH 2.4.1.) (Rhodobacter sphaeroides).